Consider the following 227-residue polypeptide: KH domain-containing protein MJ0443 (227 aa).

KH domains are found at residues 14–77 (KSIE…RDIV) and 106–163 (DYAS…KEAV).

This is KH domain-containing protein MJ0443 from Methanocaldococcus jannaschii (strain ATCC 43067 / DSM 2661 / JAL-1 / JCM 10045 / NBRC 100440) (Methanococcus jannaschii).